Consider the following 150-residue polypeptide: MSQPTPIITTKSAAKPKPKIFNLFRVCFISLLLIAAVEYFKYGTRINYEWFHCTPIKEPQSGSVIKLWARGGPSCDKRGEYKTIVKRITRDYEPNDEHLSFCIIENDNVPPVHYPIHEDKGEPGYVAYVGYDTDSELVQELCADSTIYHM.

The Cytoplasmic portion of the chain corresponds to 1–20 (MSQPTPIITTKSAAKPKPKI). Residues 21–40 (FNLFRVCFISLLLIAAVEYF) form a helical; Signal-anchor for type II membrane protein membrane-spanning segment. Over 41–150 (KYGTRINYEW…LCADSTIYHM (110 aa)) the chain is Lumenal.

The protein belongs to the LIP1 family. In terms of assembly, component of the ceramide synthase complex composed of at least LAC1, LAG1 and LIP1.

The protein resides in the endoplasmic reticulum membrane. Its function is as follows. Component of the ceramide synthase complex required for synthesis of ceramides. The chain is Ceramide synthase subunit LIP1 (LIP1) from Saccharomyces cerevisiae (strain YJM789) (Baker's yeast).